A 315-amino-acid polypeptide reads, in one-letter code: MSYASDVKKELTMLEVHFGNAKAELMALIRMNGSLSIVNKQFVLSVQTENPAIARRIYRLLKQFYDIESELIVRRKMKLKKNNFYIVRLKTGTNEILKDLDILDNFQIKETVPLEFLDDDAKVRSYLRGAFLATGSVNNPETSRYHLEIYSLYEDHNDTICEMMNRYGLNARKTERRSGYITYLKEAEKIADFLSLIGATNAMLKFEDIRIVRDMRNSVNRIVNCETANLNKIADASKKQIDNIKLIDAKVGIDKLPQKLQEVAIARLGHPEESLKNLGELIPGGPISKSGINHRLRKLNEIAEKIRAGESIAVL.

Residues 274–308 (SLKNLGELIPGGPISKSGINHRLRKLNEIAEKIRA) constitute a DNA-binding region (H-T-H motif).

Belongs to the WhiA family.

Its function is as follows. Involved in cell division and chromosome segregation. This chain is Probable cell division protein WhiA, found in Ligilactobacillus salivarius (strain UCC118) (Lactobacillus salivarius).